Here is a 248-residue protein sequence, read N- to C-terminus: Secreted and transmembrane protein 1 (248 aa).

Positions Met-1–Ala-28 are cleaved as a signal peptide. Residues Gln-29–Gly-145 are Extracellular-facing. A disulfide bond links Cys-38 and Cys-55. Asn-56 carries an N-linked (GlcNAc...) asparagine glycan. Residues Phe-146–Phe-166 traverse the membrane as a helical segment. At Ala-167–Pro-248 the chain is on the cytoplasmic side.

It belongs to the SECTM family. Interacts with CD7. As to expression, detected at the highest levels in peripheral blood leukocytes and breast cancer cell lines. Found in leukocytes of the myeloid lineage, with the strongest expression observed in granulocytes and no detectable expression in lymphocytes. Expressed in thymic epithelial cells and fibroblasts.

The protein resides in the cell membrane. The protein localises to the secreted. In terms of biological role, may be involved in thymocyte signaling. The sequence is that of Secreted and transmembrane protein 1 (SECTM1) from Homo sapiens (Human).